Here is a 182-residue protein sequence, read N- to C-terminus: Small ribosomal subunit protein uS4c (182 aa).

The S4 RNA-binding domain occupies 82-143 (MRLDNILFRL…KERSKVLIQN (62 aa)).

The protein belongs to the universal ribosomal protein uS4 family. As to quaternary structure, part of the 30S ribosomal subunit. Contacts protein S5. The interaction surface between S4 and S5 is involved in control of translational fidelity.

The protein localises to the plastid. It localises to the chloroplast. In terms of biological role, one of the primary rRNA binding proteins, it binds directly to 16S rRNA where it nucleates assembly of the body of the 30S subunit. With S5 and S12 plays an important role in translational accuracy. The chain is Small ribosomal subunit protein uS4c (rps4) from Tigridia sp. (strain Lejeune 1997).